A 376-amino-acid polypeptide reads, in one-letter code: MAKQDYYEILGVSKTAEEREIKKAYKRLAMKYHPDRNQGDKEAEAKFKEIKEAYEVLTDSQKRAAYDQYGHAAFEQGGMGGGGFGGGADFSDIFGDVFGDIFGGGRGRQRAARGADLRYNMELTLEEAVRGVTKEIRIPTLEECDVCHGSGAKPGTQPQTCPTCHGSGQVQMRQGFFAVQQTCPHCQGRGTLIKDPCNKCHGHGRVERSKTLSVKIPAGVDTGDRIRLAGEGEAGEHGAPAGDLYVQVQVKQHPIFEREGNNLYCEVPINFAMAALGGEIEVPTLDGRVKLKVPGETQTGKLFRMRGKGVKSVRGGAQGDLLCRVVVETPVGLNEKQKQLLQELQESFGGPTGEHNSPRSKSFFDGVKKFFDDLTR.

Residues 5–70 (DYYEILGVSK…QKRAAYDQYG (66 aa)) enclose the J domain. Residues 131–209 (GVTKEIRIPT…CHGHGRVERS (79 aa)) form a CR-type zinc finger. The Zn(2+) site is built by Cys144, Cys147, Cys161, Cys164, Cys183, Cys186, Cys197, and Cys200. CXXCXGXG motif repeat units follow at residues 144-151 (CDVCHGSG), 161-168 (CPTCHGSG), 183-190 (CPHCQGRG), and 197-204 (CNKCHGHG).

Belongs to the DnaJ family. In terms of assembly, homodimer. Requires Zn(2+) as cofactor.

It is found in the cytoplasm. Its function is as follows. Participates actively in the response to hyperosmotic and heat shock by preventing the aggregation of stress-denatured proteins and by disaggregating proteins, also in an autonomous, DnaK-independent fashion. Unfolded proteins bind initially to DnaJ; upon interaction with the DnaJ-bound protein, DnaK hydrolyzes its bound ATP, resulting in the formation of a stable complex. GrpE releases ADP from DnaK; ATP binding to DnaK triggers the release of the substrate protein, thus completing the reaction cycle. Several rounds of ATP-dependent interactions between DnaJ, DnaK and GrpE are required for fully efficient folding. Also involved, together with DnaK and GrpE, in the DNA replication of plasmids through activation of initiation proteins. In Escherichia fergusonii (strain ATCC 35469 / DSM 13698 / CCUG 18766 / IAM 14443 / JCM 21226 / LMG 7866 / NBRC 102419 / NCTC 12128 / CDC 0568-73), this protein is Chaperone protein DnaJ.